A 704-amino-acid polypeptide reads, in one-letter code: Elongation factor G 1 (704 aa).

Residues 8–285 (EKIRNIGISA…AVCAFLPNPK (278 aa)) form the tr-type G domain. Residues 17–24 (AHIDSGKT), 84–88 (DTPGH), and 138–141 (NKMD) each bind GTP.

It belongs to the TRAFAC class translation factor GTPase superfamily. Classic translation factor GTPase family. EF-G/EF-2 subfamily.

Its subcellular location is the cytoplasm. Catalyzes the GTP-dependent ribosomal translocation step during translation elongation. During this step, the ribosome changes from the pre-translocational (PRE) to the post-translocational (POST) state as the newly formed A-site-bound peptidyl-tRNA and P-site-bound deacylated tRNA move to the P and E sites, respectively. Catalyzes the coordinated movement of the two tRNA molecules, the mRNA and conformational changes in the ribosome. The sequence is that of Elongation factor G 1 from Myxococcus xanthus (strain DK1622).